A 1146-amino-acid chain; its full sequence is Inositol hexakisphosphate and diphosphoinositol-pentakisphosphate kinase (1146 aa).

Residues 1-33 form a disordered region; the sequence is MSGIKKEPIESDEVPQQETKNNLPSAPSEMSPL. A compositionally biased stretch (polar residues) spans 16–25; sequence QQETKNNLPS. Residues Ser-31, Ser-54, and Ser-77 each carry the phosphoserine modification. The disordered stretch occupies residues 93 to 185; it reads TALGNGNNTN…STSHPKPRLP (93 aa). Residues 96 to 106 show a composition bias toward low complexity; it reads GNGNNTNTVTT. The span at 110–120 shows a compositional bias: basic and acidic residues; sequence KKADSESKSEA. Positions 125–144 are enriched in polar residues; that stretch reads LSNSNIVNDADNINSISKTG. Low complexity predominate over residues 164-178; the sequence is SVPTSSASSRKSSTS. Position 197 to 198 (197 to 198) interacts with substrate; it reads AK. ATP-binding positions include Arg-278, Lys-351, His-358, Arg-377, 402-405, and 412-414; these read EQFM and DVK. 377–378 contributes to the substrate binding site; the sequence is RK. Positions 414 and 428 each coordinate substrate. ATP is bound by residues Ser-430, Asp-475, and 487 to 489; that span reads DVN. Residue 492–495 participates in substrate binding; it reads SFVK. The tract at residues 530–597 is polyphosphoinositide-binding domain; sequence REEKEQKWVF…VLQALRIALD (68 aa). A phosphoserine mark is found at Ser-895 and Ser-1107. The tract at residues 1106–1146 is disordered; the sequence is TSPNLSFQKRKTRRKSVSVEKLKRPASSGSSSSTSVNKTLD.

The protein belongs to the histidine acid phosphatase family. VIP1 subfamily.

Its subcellular location is the cytoplasm. The protein localises to the cytoskeleton. The enzyme catalyses 1D-myo-inositol hexakisphosphate + ATP = 1-diphospho-1D-myo-inositol 2,3,4,5,6-pentakisphosphate + ADP. The catalysed reaction is 5-diphospho-1D-myo-inositol 1,2,3,4,6-pentakisphosphate + ATP + H(+) = 1,5-bis(diphospho)-1D-myo-inositol 2,3,4,6-tetrakisphosphate + ADP. Functionally, bifunctional inositol kinase that acts in concert with the IP6K kinases to synthesize the diphosphate group-containing inositol pyrophosphates diphosphoinositol pentakisphosphate, PP-InsP5, and bis-diphosphoinositol tetrakisphosphate, (PP)2-InsP4. Phosphorylates inositol hexakisphosphate (InsP6) at position 1 to produce PP-InsP5 which is in turn phosphorylated by IP6Ks to produce (PP)2-InsP4. Alternatively, phosphorylates PP-InsP5 at position 1, produced by IP6Ks from InsP6, to produce (PP)2-InsP4. Required for maintaining cellular integrity, normal growth and interactions with the ARP complex. Acts as a regulator of the PHO80-PHO85 cyclin/cyclin-dependent kinase (CDK) complex, thereby regulating signaling of phosphate availability. Required for the function of the cortical actin cytoskeleton, possibly by participating in correct F-actin localization and ensuring polarized growth. Regulates polarized growth and modulates interphase microtubule cytoskeleton. Regulates microtubule dynamics without the requirement of microtubule plus-end tracking protein Mal3. Required for growth zone selection. In Saccharomyces cerevisiae (strain ATCC 204508 / S288c) (Baker's yeast), this protein is Inositol hexakisphosphate and diphosphoinositol-pentakisphosphate kinase.